A 233-amino-acid polypeptide reads, in one-letter code: Lipoprotein-releasing system ATP-binding protein LolD (233 aa).

In terms of domain architecture, ABC transporter spans 10–233 (YRLEGVGKEY…AGELYDQHRP (224 aa)). 46-53 (GASGSGKS) provides a ligand contact to ATP.

It belongs to the ABC transporter superfamily. Lipoprotein translocase (TC 3.A.1.125) family. As to quaternary structure, the complex is composed of two ATP-binding proteins (LolD) and two transmembrane proteins (LolC and LolE).

It is found in the cell inner membrane. Functionally, part of the ABC transporter complex LolCDE involved in the translocation of mature outer membrane-directed lipoproteins, from the inner membrane to the periplasmic chaperone, LolA. Responsible for the formation of the LolA-lipoprotein complex in an ATP-dependent manner. This is Lipoprotein-releasing system ATP-binding protein LolD from Nitratidesulfovibrio vulgaris (strain ATCC 29579 / DSM 644 / CCUG 34227 / NCIMB 8303 / VKM B-1760 / Hildenborough) (Desulfovibrio vulgaris).